Here is a 1063-residue protein sequence, read N- to C-terminus: Exportin-T (1063 aa).

Belongs to the exportin family.

It is found in the nucleus. The protein resides in the cytoplasm. TRNA nucleus export receptor which facilitates tRNA translocation across the nuclear pore complex. Involved in pre-tRNA splicing, probably by affecting the interaction of pre-tRNA with splicing endonuclease. The protein is Exportin-T (LOS1) of Kluyveromyces lactis (strain ATCC 8585 / CBS 2359 / DSM 70799 / NBRC 1267 / NRRL Y-1140 / WM37) (Yeast).